Here is a 92-residue protein sequence, read N- to C-terminus: C-C motif chemokine 5 (92 aa).

Residues 1-23 (MKVSTAAFAVLLTAAAFCTPASA) form the signal peptide. 2 cysteine pairs are disulfide-bonded: cysteine 33–cysteine 57 and cysteine 34–cysteine 73.

Belongs to the intercrine beta (chemokine CC) family.

It is found in the secreted. Functionally, chemoattractant for blood monocytes, memory T-helper cells and eosinophils. Causes the release of histamine from basophils and activates eosinophils. May activate several chemokine receptors including CCR1, CCR3, CCR4 and CCR5. May also be an agonist of the G protein-coupled receptor GPR75. Together with GPR75, may play a role in neuron survival through activation of a downstream signaling pathway involving the PI3, Akt and MAP kinases. By activating GPR75 may also play a role in insulin secretion by islet cells. This Felis catus (Cat) protein is C-C motif chemokine 5 (CCL5).